The following is a 469-amino-acid chain: MTGIRAQLWIVAFGFFMQTLDTTIVNTALPSMAASLGENPLRMQSVIVSYVLTVAVMLPASGWLADRVGVKWVFFSAIILFTLGSLLCAQAETLNELISSRVIQGIGGAMMVPVGRLTVMKIVPREQYMSAMAFVTLPGQIGPLVGPALGGFLVEYASWHWIFLINLPVGVVGALATLWLMPNYTTRTRRFDISGFIMLAIGMATLTLALDGHKGLGLPPLAIAGLILCGILALAGYWWHAKGNSSALFTLRLFNNKSYSLGLIGSMSARIGSGMLPFMTPVFLQIGLGFTPFHAGLMMIPMIIGSMGMKRIIVRVVNRFGYRRVLVSATLLLAVVSLSFPLVALMGWTLLLPIVLFFQGMLNALRFSTMNTLALKDLPNRLASSGNSLLSMVMQLSMSLGVSTAGILLGVFAHNQVVTNTPATHSAFLYSYICMAIIIALPALIFNRVPADTGTNRNLPRASAKAANR.

Helical transmembrane passes span 8–28 (LWIV…VNTA), 45–65 (SVIV…GWLA), 68–88 (VGVK…SLLC), 102–122 (VIQG…VMKI), 134–154 (FVTL…GFLV), 161–181 (WIFL…LWLM), 191–211 (FDIS…LALD), 215–235 (GLGL…LALA), 263–283 (LIGS…TPVF), 286–306 (IGLG…IIGS), 338–358 (LSFP…VLFF), 392–412 (MVMQ…LGVF), and 426–446 (SAFL…ALIF).

The protein belongs to the major facilitator superfamily. TCR/Tet family.

It is found in the cell inner membrane. The sequence is that of Putative multidrug resistance protein MdtD from Yersinia enterocolitica serotype O:8 / biotype 1B (strain NCTC 13174 / 8081).